We begin with the raw amino-acid sequence, 360 residues long: Phospho-N-acetylmuramoyl-pentapeptide-transferase (360 aa).

10 consecutive transmembrane segments (helical) span residues 27–47, 71–91, 94–114, 132–152, 168–188, 199–219, 236–256, 263–283, 288–308, and 338–358; these read IVSL…MIAF, TPTM…LLWV, NNPY…VGFV, WKYF…YSFG, VMPQ…VGTS, GLAI…AWAT, AGEL…FLWF, VFMG…IAVL, FLLV…ILQV, and VIVR…ATLK.

This sequence belongs to the glycosyltransferase 4 family. MraY subfamily. Mg(2+) serves as cofactor.

Its subcellular location is the cell inner membrane. The catalysed reaction is UDP-N-acetyl-alpha-D-muramoyl-L-alanyl-gamma-D-glutamyl-meso-2,6-diaminopimeloyl-D-alanyl-D-alanine + di-trans,octa-cis-undecaprenyl phosphate = di-trans,octa-cis-undecaprenyl diphospho-N-acetyl-alpha-D-muramoyl-L-alanyl-D-glutamyl-meso-2,6-diaminopimeloyl-D-alanyl-D-alanine + UMP. The protein operates within cell wall biogenesis; peptidoglycan biosynthesis. Its function is as follows. Catalyzes the initial step of the lipid cycle reactions in the biosynthesis of the cell wall peptidoglycan: transfers peptidoglycan precursor phospho-MurNAc-pentapeptide from UDP-MurNAc-pentapeptide onto the lipid carrier undecaprenyl phosphate, yielding undecaprenyl-pyrophosphoryl-MurNAc-pentapeptide, known as lipid I. This Photorhabdus laumondii subsp. laumondii (strain DSM 15139 / CIP 105565 / TT01) (Photorhabdus luminescens subsp. laumondii) protein is Phospho-N-acetylmuramoyl-pentapeptide-transferase.